The sequence spans 409 residues: Peptidase T (409 aa).

Histidine 78 provides a ligand contact to Zn(2+). The active site involves aspartate 80. Aspartate 140 is a binding site for Zn(2+). Catalysis depends on glutamate 173, which acts as the Proton acceptor. Positions 174, 196, and 379 each coordinate Zn(2+).

Belongs to the peptidase M20B family. Requires Zn(2+) as cofactor.

It localises to the cytoplasm. It carries out the reaction Release of the N-terminal residue from a tripeptide.. Functionally, cleaves the N-terminal amino acid of tripeptides. This Salmonella paratyphi A (strain ATCC 9150 / SARB42) protein is Peptidase T.